A 366-amino-acid chain; its full sequence is Dof zinc finger protein DOF1.3 (366 aa).

The segment at 22–103 (DPYSSSSHVL…KTTELKKPDK (82 aa)) is disordered. Composition is skewed to low complexity over residues 25 to 45 (SSSS…SLSL) and 56 to 69 (TDNT…NLNN). Basic and acidic residues-rich tracts occupy residues 70-83 (ESKE…DQHS) and 91-103 (EEEK…KPDK). The segment at 105 to 159 (LPCPRCNSADTKFCYYNNYNVNQPRHFCRKCQRYWTAGGSMRIVPVGSGRRKNKG) adopts a Dof-type zinc-finger fold. Zn(2+) is bound by residues cysteine 107, cysteine 110, cysteine 132, and cysteine 135.

The protein resides in the nucleus. In terms of biological role, transcription factor that binds specifically to a 5'-AA[AG]G-3' consensus core sequence. The protein is Dof zinc finger protein DOF1.3 (DOF1.3) of Arabidopsis thaliana (Mouse-ear cress).